The primary structure comprises 129 residues: Large ribosomal subunit protein eL32 (129 aa).

This sequence belongs to the eukaryotic ribosomal protein eL32 family.

This chain is Large ribosomal subunit protein eL32 (rpl32e), found in Methanosarcina mazei (strain ATCC BAA-159 / DSM 3647 / Goe1 / Go1 / JCM 11833 / OCM 88) (Methanosarcina frisia).